A 145-amino-acid chain; its full sequence is Flagellar assembly factor FliW (145 aa).

It belongs to the FliW family. Interacts with translational regulator CsrA and flagellin(s).

The protein localises to the cytoplasm. Acts as an anti-CsrA protein, binds CsrA and prevents it from repressing translation of its target genes, one of which is flagellin. Binds to flagellin and participates in the assembly of the flagellum. This is Flagellar assembly factor FliW from Anoxybacillus flavithermus (strain DSM 21510 / WK1).